We begin with the raw amino-acid sequence, 249 residues long: MFPIKKRKAIKNNNINAAQIPKHIAIIMDGNGRWAKQKKMPRIKGHYEGMQTVKKITRYASDLGVKYLTLYAFSTENWSRPKDEVNYLMKLPGDFLNTFLPELIEKNVKVETIGFIDDLPDHTKKAVLEAKEKTKHNTGLTLVFALNYGGRKEIISAVQLIAERYKSGEISLDEISETHFNEYLFTANMPDPELLIRTSGEERLSNFLIWQCSYSEFVFIDEFWPDFNEESLAQCISIYQNRHRRFGGL.

Asp-29 is a catalytic residue. Asp-29 is a binding site for Mg(2+). Substrate is bound by residues 30–33, Trp-34, Arg-42, His-46, and 74–76; these read GNGR and STE. Residue Asn-77 is the Proton acceptor of the active site. Substrate-binding positions include Trp-78, Arg-80, Arg-197, and 203-205; that span reads RLS. A Mg(2+)-binding site is contributed by Glu-216.

The protein belongs to the UPP synthase family. Homodimer. Mg(2+) is required as a cofactor.

It carries out the reaction 8 isopentenyl diphosphate + (2E,6E)-farnesyl diphosphate = di-trans,octa-cis-undecaprenyl diphosphate + 8 diphosphate. In terms of biological role, generates ditrans,octacis-undecaprenyl pyrophosphate (UPP) from isopentenyl pyrophosphate (IPP) and farnesyl diphosphate. UPP is the precursor of glycosyl carrier lipid in the biosynthesis of bacterial cell wall polysaccharide components such as peptidoglycan and lipopolysaccharide. This is Ditrans,polycis-undecaprenyl-diphosphate synthase ((2E,6E)-farnesyl-diphosphate specific) (uppS) from Micrococcus luteus (Micrococcus lysodeikticus).